We begin with the raw amino-acid sequence, 312 residues long: Acetyl-coenzyme A carboxylase carboxyl transferase subunit alpha (312 aa).

The 251-residue stretch at 36 to 286 (ELEKEIEKTF…KTYFLESVKA (251 aa)) folds into the CoA carboxyltransferase C-terminal domain.

The protein belongs to the AccA family. As to quaternary structure, acetyl-CoA carboxylase is a heterohexamer composed of biotin carboxyl carrier protein (AccB), biotin carboxylase (AccC) and two subunits each of ACCase subunit alpha (AccA) and ACCase subunit beta (AccD).

It localises to the cytoplasm. The catalysed reaction is N(6)-carboxybiotinyl-L-lysyl-[protein] + acetyl-CoA = N(6)-biotinyl-L-lysyl-[protein] + malonyl-CoA. The protein operates within lipid metabolism; malonyl-CoA biosynthesis; malonyl-CoA from acetyl-CoA: step 1/1. Functionally, component of the acetyl coenzyme A carboxylase (ACC) complex. First, biotin carboxylase catalyzes the carboxylation of biotin on its carrier protein (BCCP) and then the CO(2) group is transferred by the carboxyltransferase to acetyl-CoA to form malonyl-CoA. This is Acetyl-coenzyme A carboxylase carboxyl transferase subunit alpha from Sulfurovum sp. (strain NBC37-1).